Consider the following 539-residue polypeptide: CTP synthase (539 aa).

An amidoligase domain region spans residues 1–267 (MTKYIFVTGG…DQKVCDFLHL (267 aa)). S13 is a binding site for CTP. Position 13 (S13) interacts with UTP. 14-19 (SLGKGI) is an ATP binding site. Y54 contributes to the L-glutamine binding site. Residue D71 coordinates ATP. Mg(2+) is bound by residues D71 and E141. CTP contacts are provided by residues 148–150 (DIE), 188–193 (KTKPTQ), and K224. Residues 188–193 (KTKPTQ) and K224 contribute to the UTP site. One can recognise a Glutamine amidotransferase type-1 domain in the interval 294–537 (KITLVGKYVE…IGAASGLPAQ (244 aa)). Residue G356 coordinates L-glutamine. C383 acts as the Nucleophile; for glutamine hydrolysis in catalysis. Residues 384-387 (LGMQ), E407, and R465 contribute to the L-glutamine site. Residues H510 and E512 contribute to the active site.

The protein belongs to the CTP synthase family. As to quaternary structure, homotetramer.

The catalysed reaction is UTP + L-glutamine + ATP + H2O = CTP + L-glutamate + ADP + phosphate + 2 H(+). It carries out the reaction L-glutamine + H2O = L-glutamate + NH4(+). The enzyme catalyses UTP + NH4(+) + ATP = CTP + ADP + phosphate + 2 H(+). The protein operates within pyrimidine metabolism; CTP biosynthesis via de novo pathway; CTP from UDP: step 2/2. Allosterically activated by GTP, when glutamine is the substrate; GTP has no effect on the reaction when ammonia is the substrate. The allosteric effector GTP functions by stabilizing the protein conformation that binds the tetrahedral intermediate(s) formed during glutamine hydrolysis. Inhibited by the product CTP, via allosteric rather than competitive inhibition. Its function is as follows. Catalyzes the ATP-dependent amination of UTP to CTP with either L-glutamine or ammonia as the source of nitrogen. Regulates intracellular CTP levels through interactions with the four ribonucleotide triphosphates. The chain is CTP synthase from Lactobacillus acidophilus (strain ATCC 700396 / NCK56 / N2 / NCFM).